Here is a 404-residue protein sequence, read N- to C-terminus: CCA-adding enzyme (404 aa).

ATP contacts are provided by glycine 27 and arginine 30. Residues glycine 27 and arginine 30 each coordinate CTP. Positions 40 and 42 each coordinate Mg(2+). ATP is bound by residues arginine 111, aspartate 154, arginine 157, arginine 160, and arginine 163. Residues arginine 111, aspartate 154, arginine 157, arginine 160, and arginine 163 each contribute to the CTP site.

The protein belongs to the tRNA nucleotidyltransferase/poly(A) polymerase family. Bacterial CCA-adding enzyme type 3 subfamily. Homodimer. It depends on Mg(2+) as a cofactor.

It catalyses the reaction a tRNA precursor + 2 CTP + ATP = a tRNA with a 3' CCA end + 3 diphosphate. It carries out the reaction a tRNA with a 3' CCA end + 2 CTP + ATP = a tRNA with a 3' CCACCA end + 3 diphosphate. Catalyzes the addition and repair of the essential 3'-terminal CCA sequence in tRNAs without using a nucleic acid template. Adds these three nucleotides in the order of C, C, and A to the tRNA nucleotide-73, using CTP and ATP as substrates and producing inorganic pyrophosphate. tRNA 3'-terminal CCA addition is required both for tRNA processing and repair. Also involved in tRNA surveillance by mediating tandem CCA addition to generate a CCACCA at the 3' terminus of unstable tRNAs. While stable tRNAs receive only 3'-terminal CCA, unstable tRNAs are marked with CCACCA and rapidly degraded. This Geobacillus sp. (strain WCH70) protein is CCA-adding enzyme.